We begin with the raw amino-acid sequence, 207 residues long: MLNKLSRLLADAGISLTDHQKTLLAAYVDMLHKWNKAYNLTSVRDPNEMLVRHILDSIVVAPYLQGQRFIDVGTGPGLPGIPLAIVLPDAHFTLLDSLGKRVRFLRQVQHELKLENITPVQSRVEAYPSEPPFDGVISRAFASLNDMVSWCHHLPGEKGRFYALKGQLPGDEIASLPDNFSVESVEKLRVPQLEGERHLVIIKSNKV.

S-adenosyl-L-methionine is bound by residues Gly73, Leu78, 124-125, and Arg139; that span reads VE.

The protein belongs to the methyltransferase superfamily. RNA methyltransferase RsmG family.

Its subcellular location is the cytoplasm. The enzyme catalyses guanosine(527) in 16S rRNA + S-adenosyl-L-methionine = N(7)-methylguanosine(527) in 16S rRNA + S-adenosyl-L-homocysteine. Its function is as follows. Specifically methylates the N7 position of guanine in position 527 of 16S rRNA. The sequence is that of Ribosomal RNA small subunit methyltransferase G from Salmonella agona (strain SL483).